We begin with the raw amino-acid sequence, 230 residues long: Broad-specificity phosphatase YOR283W (230 aa).

Histidine 24 serves as the catalytic Tele-phosphohistidine intermediate. Substrate-binding positions include 36 to 37 (QG) and 102 to 105 (ERYM). The active-site Proton donor/acceptor is glutamate 102.

It belongs to the phosphoglycerate mutase family. BPG-dependent PGAM subfamily.

It is found in the cytoplasm. Its subcellular location is the nucleus. In terms of biological role, metal-independent phosphatase active against a broad range of phosphorylated substrates including nucleoside tri- and diphosphates, phosphorylated organic acids, and amino acids. Shows no activity against phytic acid, phosphorylated carbohydrates, and nucleoside monophosphates. This Saccharomyces cerevisiae (strain ATCC 204508 / S288c) (Baker's yeast) protein is Broad-specificity phosphatase YOR283W.